Here is an 868-residue protein sequence, read N- to C-terminus: Lysosomal cholesterol signaling protein (868 aa).

The Lumenal portion of the chain corresponds to 1-36 (MDSYFSAKNSTLAGDMNATWPASHGFNATGDPPSMS). Positions 1-368 (MDSYFSAKNS…SAWLLTFPTM (368 aa)) are PIN-like transporter. N9, N17, and N27 each carry an N-linked (GlcNAc...) asparagine glycan. Residues 37–57 (ITRLFPALLECFGIVLCGYIA) form a helical membrane-spanning segment. Cholesterol is bound by residues F41 and Y55. Topologically, residues 58–77 (GRANIITSTQAKGLGNFVSR) are cytoplasmic. The chain crosses the membrane as a helical span at residues 78–98 (FALPALLFKNMVVLNFSNVDW). The Lumenal portion of the chain corresponds to 99–102 (AFLY). The chain crosses the membrane as a helical span at residues 103–123 (SVLIGKASVFFIVCVLTLLVA). Topologically, residues 124 to 131 (SPESRFSK) are cytoplasmic. A discontinuously helical transmembrane segment spans residues 132 to 152 (AGLFPIFATQSNDFALGYPIV). At 153–165 (EALYQSTYPEYLQ) the chain is on the lumenal side. Residues 166-186 (YIYLVAPISLMMLNPIGFIFC) form a helical membrane-spanning segment. Topologically, residues 187-211 (EIQKSKDTQNASQNKAKIVGLGFLR) are cytoplasmic. A discontinuously helical membrane pass occupies residues 212-232 (VLQNPIVFMVFVGIAFNFILD). Topologically, residues 233–241 (KKIPVYMEN) are lumenal. A discontinuously helical membrane pass occupies residues 242 to 262 (FLDGLANSFSGSALFYLGLTM). The Cytoplasmic portion of the chain corresponds to 263–271 (VGKIRRLKK). Positions 264, 265, and 266 each coordinate cholesterol. A helical membrane pass occupies residues 272 to 292 (SAFVVLTLLITAKLLVLPLLC). The Lumenal segment spans residues 293–313 (REMVELLDKGDSVVNHTSLSN). N307 carries N-linked (GlcNAc...) asparagine glycosylation. Residues 314–334 (YAFLYGVFPVAPGVAIFATQF) form a discontinuously helical membrane-spanning segment. The Cytoplasmic segment spans residues 335–344 (NMEVEIITSG). Residues 345–365 (MVISTFVSAPIMYVSAWLLTF) traverse the membrane as a helical segment. Residues 366-379 (PTMDAKPLAYAIQN) are Lumenal-facing. A GPCR region spans residues 378–715 (QNVSFDISII…FGIFGLDKHL (338 aa)). The N-linked (GlcNAc...) asparagine glycan is linked to N379. Residues 380 to 400 (VSFDISIISLVSLIWSLSILL) form a helical membrane-spanning segment. Residues 401-412 (LSKKYKQLPHML) are Cytoplasmic-facing. Residues 413-433 (TANLLIAQTIVCAGMMIWNFV) traverse the membrane as a helical segment. Topologically, residues 434–436 (KEK) are lumenal. A helical transmembrane segment spans residues 437–457 (NFVGQILVFVLLYSSLYSTYL). Residues 458-478 (WTGLLAVSLFLLKKRESVQLP) are Cytoplasmic-facing. The helical transmembrane segment at 479–499 (VGIIIISGWGIPALLVGVLLI) threads the bilayer. The Lumenal portion of the chain corresponds to 500–518 (TGKHNGDSIDSAFFYGKEQ). The chain crosses the membrane as a helical span at residues 519 to 539 (MITTAVTLFCSILIAGVSLMC). The Cytoplasmic portion of the chain corresponds to 540–658 (MNRTTQAGHY…GDPQLTRHVL (119 aa)). The disordered stretch occupies residues 550–582 (EGFGQSQNHKPVEPGSTAFEENPAPTNEPELFP). Position 655 (R655) interacts with cholesterol. Residues 659–679 (LCLLLIIGLFANLSSCLWWLF) form a helical membrane-spanning segment. At 680-689 (NHETGRLYVE) the chain is on the lumenal side. A helical membrane pass occupies residues 690–710 (LQFFCAVFNFGQGFISFGIFG). Residues 711–868 (LDKHLIILPF…SSPPSVSPKT (158 aa)) are Cytoplasmic-facing. Positions 755–833 (YHRDLCIRNI…DEYLFYRFLQ (79 aa)) constitute a DEP domain. The segment at 836–868 (PEQSPPARTLRDHQEESYKEIGHSSPPSVSPKT) is disordered. The segment covering 844–857 (TLRDHQEESYKEIG) has biased composition (basic and acidic residues).

Homodimer; via the transporter region and DEP domain. Interacts with the GATOR1 complex; preventing interaction between GATOR1 and KICSTOR; interaction is disrupted upon cholesterol starvation. In terms of tissue distribution, widely expressed in adult tissues and during development. In brain, widely distributed in forebrain regions, while it shows a more restricted distribution in the midbrain and hindbrain regions. Expressed at highest level in the lateral part of striatum and hippocampus.

The protein resides in the lysosome membrane. In terms of biological role, cholesterol-binding protein that acts as a regulator of mTORC1 signaling pathway. Acts as a sensor of cholesterol to signal cholesterol sufficiency to mTORC1: in presence of cholesterol, binds cholesterol, leading to disruption of the interaction between the GATOR1 and KICSTOR complexes and promotion of mTORC1 signaling. Upon cholesterol starvation, GPR155/LYCHOS is unable to perturb the association between GATOR1 and KICSTOR, leading to mTORC1 signaling inhibition. Binds indole-3-acetic acid and may play a role in tryptophan metabolism. This chain is Lysosomal cholesterol signaling protein, found in Mus musculus (Mouse).